Consider the following 364-residue polypeptide: tRNA-specific 2-thiouridylase MnmA (364 aa).

ATP-binding positions include 12–19 and Met38; that span reads GISGGVDS. Residues 98–100 form an interaction with target base in tRNA region; the sequence is NPD. Catalysis depends on Cys103, which acts as the Nucleophile. Cys103 and Cys199 are oxidised to a cystine. Residue Gly127 coordinates ATP. Positions 149 to 151 are interaction with tRNA; that stretch reads KEQ. The active-site Cysteine persulfide intermediate is the Cys199. The interval 311-312 is interaction with tRNA; that stretch reads RY.

This sequence belongs to the MnmA/TRMU family.

The protein localises to the cytoplasm. The catalysed reaction is S-sulfanyl-L-cysteinyl-[protein] + uridine(34) in tRNA + AH2 + ATP = 2-thiouridine(34) in tRNA + L-cysteinyl-[protein] + A + AMP + diphosphate + H(+). Catalyzes the 2-thiolation of uridine at the wobble position (U34) of tRNA, leading to the formation of s(2)U34. This chain is tRNA-specific 2-thiouridylase MnmA, found in Hahella chejuensis (strain KCTC 2396).